Here is a 436-residue protein sequence, read N- to C-terminus: Putative permease MJ0326 (436 aa).

12 consecutive transmembrane segments (helical) span residues 24–44, 51–71, 79–99, 103–123, 139–159, 171–191, 194–214, 235–255, 322–342, 345–365, 381–401, and 416–436; these read LAGITTFMTMAYIIFVNPQIL, FGAVMVATCIASAIATLVMGL, LAPGMGLNAYFTYGVCLGMGI, VALGAVFISGVLFIILTLTKI, TAVGIGLFIAFIGLKSAGIIV, LMEPSTLLALFGIFLTSILVS, VIGAILIGIIVTSLIGMILGI, LDIMGALNLGLLTIVLAFFFV, GFVSVVVAMLFLLSLFFYPVV, IPPYATAAALVIVGALMMRSV, ITLLTIPLTFSIATGLALGFI, and VHWLVYVLAVIFALRFVYLSG.

This sequence belongs to the nucleobase:cation symporter-2 (NCS2) (TC 2.A.40) family. Azg-like subfamily.

It is found in the cell membrane. In Methanocaldococcus jannaschii (strain ATCC 43067 / DSM 2661 / JAL-1 / JCM 10045 / NBRC 100440) (Methanococcus jannaschii), this protein is Putative permease MJ0326.